Consider the following 456-residue polypeptide: MAKRRERRGRRQHRSHRRIQRIIDGADFINYMPDDILHHILSFIPTDLAMRTSVLSRRWRHVWCETPCLDITLKHGAMNQTLTSYTAPIITSFKLVMDLNSNTVPQVDSWIEFALSRNVQNLSVFVRDFTYSKTYRFPDIFYLSSSLKLLDVTLDFFDMIPTCTVSWKSLRNLTLRFCQIPDESIHNILSGCPILESLTLDTCRLLERLDLSKSPNLRRLDINQQYRRTGPVAIVAPHIYYLRLTYSSTPSTIVDVSSLSEANLTIISSLLSPLTADGYQTMALEMLSKFHNVKRLTVGETLLQILSLAELRGVPFPTLKVQTLTVKTEFVRSVIPGISRLLQNSPGLKKLRPSTMKMHHLKGLYPDQCWRSTCEVFPTSKEIYKMLGCNDATLKLVASFMDLVLRNAKTLERMVVWLGGIYFNGDAPWFEEELFDMVETLSRNNNVSILLKQSNC.

Residues 26 to 72 (ADFINYMPDDILHHILSFIPTDLAMRTSVLSRRWRHVWCETPCLDIT) form the F-box domain. 5 LRR repeats span residues 126 to 154 (VRDFTYSKTYRFPDIFYLSSSLKLLDVTL), 177 to 202 (FCQIPDESIHNILSGCPILESLTLDT), 206 to 224 (LERLDLSKSPNLRRLDINQ), 271 to 300 (LSPLTADGYQTMALEMLSKFHNVKRLTVGE), and 330 to 355 (FVRSVIPGISRLLQNSPGLKKLRPST).

In Arabidopsis thaliana (Mouse-ear cress), this protein is Putative F-box/LRR-repeat protein At5g02700.